We begin with the raw amino-acid sequence, 419 residues long: Glutamyl-tRNA reductase (419 aa).

Substrate contacts are provided by residues 49 to 52, S107, 112 to 114, and Q118; these read TCNR and EPQ. The active-site Nucleophile is C50. 187-192 serves as a coordination point for NADP(+); that stretch reads GAGETI.

Belongs to the glutamyl-tRNA reductase family. As to quaternary structure, homodimer.

The enzyme catalyses (S)-4-amino-5-oxopentanoate + tRNA(Glu) + NADP(+) = L-glutamyl-tRNA(Glu) + NADPH + H(+). It functions in the pathway porphyrin-containing compound metabolism; protoporphyrin-IX biosynthesis; 5-aminolevulinate from L-glutamyl-tRNA(Glu): step 1/2. Catalyzes the NADPH-dependent reduction of glutamyl-tRNA(Glu) to glutamate 1-semialdehyde (GSA). In Psychromonas ingrahamii (strain DSM 17664 / CCUG 51855 / 37), this protein is Glutamyl-tRNA reductase.